The sequence spans 70 residues: Large ribosomal subunit protein bL32 (70 aa).

Residues 1–19 (MAVPKKKTSPSRRGMRRSH) are compositionally biased toward basic residues. The segment at 1–21 (MAVPKKKTSPSRRGMRRSHQA) is disordered.

Belongs to the bacterial ribosomal protein bL32 family.

The sequence is that of Large ribosomal subunit protein bL32 from Granulibacter bethesdensis (strain ATCC BAA-1260 / CGDNIH1).